Consider the following 365-residue polypeptide: tRNA-specific 2-thiouridylase MnmA (365 aa).

ATP is bound by residues 14–21 (AMSGGVDS) and Leu-40. Cys-108 (nucleophile) is an active-site residue. A disulfide bond links Cys-108 and Cys-204. ATP is bound at residue Gly-132. The interval 154-156 (KDQ) is interaction with tRNA. The active-site Cysteine persulfide intermediate is Cys-204.

This sequence belongs to the MnmA/TRMU family.

The protein localises to the cytoplasm. The catalysed reaction is S-sulfanyl-L-cysteinyl-[protein] + uridine(34) in tRNA + AH2 + ATP = 2-thiouridine(34) in tRNA + L-cysteinyl-[protein] + A + AMP + diphosphate + H(+). Catalyzes the 2-thiolation of uridine at the wobble position (U34) of tRNA, leading to the formation of s(2)U34. The polypeptide is tRNA-specific 2-thiouridylase MnmA (Rickettsia africae (strain ESF-5)).